The following is a 506-amino-acid chain: ATP synthase subunit alpha (506 aa).

171 to 178 (GDRQTGKT) serves as a coordination point for ATP.

Belongs to the ATPase alpha/beta chains family. F-type ATPases have 2 components, CF(1) - the catalytic core - and CF(0) - the membrane proton channel. CF(1) has five subunits: alpha(3), beta(3), gamma(1), delta(1), epsilon(1). CF(0) has four main subunits: a(1), b(1), b'(1) and c(9-12).

Its subcellular location is the cellular thylakoid membrane. The catalysed reaction is ATP + H2O + 4 H(+)(in) = ADP + phosphate + 5 H(+)(out). Functionally, produces ATP from ADP in the presence of a proton gradient across the membrane. The alpha chain is a regulatory subunit. This chain is ATP synthase subunit alpha, found in Trichormus variabilis (strain ATCC 29413 / PCC 7937) (Anabaena variabilis).